An 81-amino-acid chain; its full sequence is 8.6 kDa transglutaminase substrate (81 aa).

As to quaternary structure, multimeric. As to expression, hemolymph; Hemocyte.

The chain is 8.6 kDa transglutaminase substrate from Tachypleus tridentatus (Japanese horseshoe crab).